The primary structure comprises 156 residues: C-type lectin lectoxin-Lei1 (156 aa).

Positions 1-23 (MRRFLFLSLGVLVVAFSLNGIGA) are cleaved as a signal peptide. 3 disulfide bridges follow: cysteine 27-cysteine 38, cysteine 55-cysteine 154, and cysteine 129-cysteine 146. Residues 34 to 155 (FDRFCYKVIK…CESRNIFICK (122 aa)) form the C-type lectin domain. Asparagine 60 and asparagine 99 each carry an N-linked (GlcNAc...) asparagine glycan. A Sugar-binding motif is present at residues 119–121 (KRN). Asparagine 142 contacts Ca(2+).

The protein belongs to the true venom lectin family. In terms of tissue distribution, expressed by the venom gland.

Its subcellular location is the secreted. Lectin which recognizes specific carbohydrate structures and agglutinates a variety of animal cells by binding to cell-surface glycoproteins and glycolipids. May be a calcium-dependent lectin. In Leioheterodon madagascariensis (Malagasy giant hognose snake), this protein is C-type lectin lectoxin-Lei1.